The following is a 382-amino-acid chain: Ferredoxin--NADP reductase, root isozyme 2, chloroplastic (382 aa).

Residues 1–64 constitute a chloroplast transit peptide; it reads MSHSAVSQAG…DGKRYPSTTI (64 aa). In terms of domain architecture, FAD-binding FR-type spans 97 to 225; sequence KESYTAKIVS…TGPSGKVMLL (129 aa). Cys200 and Cys205 are joined by a disulfide. Ser201 is subject to Phosphoserine. Residue Thr233 is modified to Phosphothreonine. 235-253 provides a ligand contact to NADP(+); the sequence is IMIATGTGVAPYRGYLRRM.

This sequence belongs to the ferredoxin--NADP reductase type 1 family. It depends on FAD as a cofactor. In terms of tissue distribution, expressed in shoots and roots. More abundant in roots than RFNR1.

The protein resides in the plastid. It is found in the chloroplast. It catalyses the reaction 2 reduced [2Fe-2S]-[ferredoxin] + NADP(+) + H(+) = 2 oxidized [2Fe-2S]-[ferredoxin] + NADPH. Maintains the supply of reduced ferredoxin under non-photosynthetic conditions. This Arabidopsis thaliana (Mouse-ear cress) protein is Ferredoxin--NADP reductase, root isozyme 2, chloroplastic (RFNR2).